The chain runs to 133 residues: Transcription antitermination protein NusB (133 aa).

The protein belongs to the NusB family.

In terms of biological role, involved in transcription antitermination. Required for transcription of ribosomal RNA (rRNA) genes. Binds specifically to the boxA antiterminator sequence of the ribosomal RNA (rrn) operons. This is Transcription antitermination protein NusB from Clostridium botulinum (strain Alaska E43 / Type E3).